We begin with the raw amino-acid sequence, 35 residues long: Photosystem II reaction center protein T (35 aa).

A helical transmembrane segment spans residues 3-23 (ALVYTFLLVSTLGIIFFAIFF).

The protein belongs to the PsbT family. In terms of assembly, PSII is composed of 1 copy each of membrane proteins PsbA, PsbB, PsbC, PsbD, PsbE, PsbF, PsbH, PsbI, PsbJ, PsbK, PsbL, PsbM, PsbT, PsbY, PsbZ, Psb30/Ycf12, at least 3 peripheral proteins of the oxygen-evolving complex and a large number of cofactors. It forms dimeric complexes.

It is found in the plastid. Its subcellular location is the chloroplast thylakoid membrane. In terms of biological role, found at the monomer-monomer interface of the photosystem II (PS II) dimer, plays a role in assembly and dimerization of PSII. PSII is a light-driven water plastoquinone oxidoreductase, using light energy to abstract electrons from H(2)O, generating a proton gradient subsequently used for ATP formation. This chain is Photosystem II reaction center protein T, found in Gunnera chilensis (Chilean rhubarb).